The sequence spans 428 residues: UPF0597 protein BF3560 (428 aa).

It belongs to the UPF0597 family.

The chain is UPF0597 protein BF3560 from Bacteroides fragilis (strain ATCC 25285 / DSM 2151 / CCUG 4856 / JCM 11019 / LMG 10263 / NCTC 9343 / Onslow / VPI 2553 / EN-2).